We begin with the raw amino-acid sequence, 452 residues long: MKETIVAQATAPGRGGIGILRVSGPKAVEVAHTVLGKCPKPRMADYLPFKDSDGNVLDQGIALYFKAPHSFTGEDVLELQGHGGQVVLDLLLKRILQLEGLRLARPGEFSEQAFLNDKLDLAQAEAIADLIDASSEQAARSALKSLQGEFSNKVNQLVDSVIYLRTYVEAAIDFPDEEIDFLADGKIEAHLNDIITQLDHVRSEAKQGSILREGMKVVIAGRPNAGKSSLLNALAGREAAIVTDIAGTTRDVLREHIHIDGMPLHIIDTAGLREATDEVERIGIVRAWSEIEQADRILLMLDSTEADNQDLEKVRSEFLTKLPSNIPVTIVRNKADLSGENEGIVEQNGYTVITLSAKTQQGIALLREHLKQSMGYQTNMEGGFLARRRHLEALEQAATHLQQGHVQLTQFYAGELLAEELRRVQNHLSEITGQFTSDDLLGNIFSSFCIGK.

Residues R21, E78, and K118 each coordinate (6S)-5-formyl-5,6,7,8-tetrahydrofolate. The 162-residue stretch at 214–375 (GMKVVIAGRP…LREHLKQSMG (162 aa)) folds into the TrmE-type G domain. Position 224 (N224) interacts with K(+). Residues 224 to 229 (NAGKSS), 243 to 249 (TDIAGTT), 268 to 271 (DTAG), and 333 to 336 (NKAD) each bind GTP. Position 228 (S228) interacts with Mg(2+). The K(+) site is built by T243, I245, and T248. A Mg(2+)-binding site is contributed by T249. K452 serves as a coordination point for (6S)-5-formyl-5,6,7,8-tetrahydrofolate.

This sequence belongs to the TRAFAC class TrmE-Era-EngA-EngB-Septin-like GTPase superfamily. TrmE GTPase family. As to quaternary structure, homodimer. Heterotetramer of two MnmE and two MnmG subunits. K(+) is required as a cofactor.

The protein resides in the cytoplasm. Exhibits a very high intrinsic GTPase hydrolysis rate. Involved in the addition of a carboxymethylaminomethyl (cmnm) group at the wobble position (U34) of certain tRNAs, forming tRNA-cmnm(5)s(2)U34. The polypeptide is tRNA modification GTPase MnmE (Pasteurella multocida (strain Pm70)).